Reading from the N-terminus, the 511-residue chain is 2,3-bisphosphoglycerate-independent phosphoglycerate mutase (511 aa).

Mn(2+) is bound by residues aspartate 12 and serine 62. Serine 62 serves as the catalytic Phosphoserine intermediate. Substrate contacts are provided by residues histidine 123, 153 to 154, arginine 185, arginine 191, 260 to 263, and lysine 333; these read RD and RPDR. Positions 400, 404, 441, 442, and 460 each coordinate Mn(2+).

Belongs to the BPG-independent phosphoglycerate mutase family. In terms of assembly, monomer. Requires Mn(2+) as cofactor.

It catalyses the reaction (2R)-2-phosphoglycerate = (2R)-3-phosphoglycerate. It participates in carbohydrate degradation; glycolysis; pyruvate from D-glyceraldehyde 3-phosphate: step 3/5. In terms of biological role, catalyzes the interconversion of 2-phosphoglycerate and 3-phosphoglycerate. The chain is 2,3-bisphosphoglycerate-independent phosphoglycerate mutase from Clostridium novyi (strain NT).